A 103-amino-acid chain; its full sequence is Putative double-stranded DNA mimic protein APJL_1366 (103 aa).

The protein belongs to the putative dsDNA mimic protein family.

Functionally, may act as a double-stranded DNA (dsDNA) mimic. Probably regulates the activity of a dsDNA-binding protein. This Actinobacillus pleuropneumoniae serotype 3 (strain JL03) protein is Putative double-stranded DNA mimic protein APJL_1366.